The chain runs to 412 residues: Serine hydroxymethyltransferase (412 aa).

Residues Leu-117 and 121 to 123 (GHL) contribute to the (6S)-5,6,7,8-tetrahydrofolate site. N6-(pyridoxal phosphate)lysine is present on Lys-226. Residues Glu-242 and 350–352 (SPF) contribute to the (6S)-5,6,7,8-tetrahydrofolate site.

The protein belongs to the SHMT family. As to quaternary structure, homodimer. Requires pyridoxal 5'-phosphate as cofactor.

It localises to the cytoplasm. It catalyses the reaction (6R)-5,10-methylene-5,6,7,8-tetrahydrofolate + glycine + H2O = (6S)-5,6,7,8-tetrahydrofolate + L-serine. It functions in the pathway one-carbon metabolism; tetrahydrofolate interconversion. Its pathway is amino-acid biosynthesis; glycine biosynthesis; glycine from L-serine: step 1/1. Catalyzes the reversible interconversion of serine and glycine with tetrahydrofolate (THF) serving as the one-carbon carrier. Also exhibits THF-independent aldolase activity toward beta-hydroxyamino acids, producing glycine and aldehydes, via a retro-aldol mechanism. This chain is Serine hydroxymethyltransferase, found in Methanosarcina mazei (strain ATCC BAA-159 / DSM 3647 / Goe1 / Go1 / JCM 11833 / OCM 88) (Methanosarcina frisia).